The following is a 115-amino-acid chain: Waprin-like protein (115 aa).

A signal peptide spans 1–21; the sequence is MNRSLLAFAIVLVLLVAGTSS. The WAP domain maps to 23–69; sequence LFNKSGNCPMRNTVTSCTPRCIGDGECSSNQKCCPNKCGTTSCANSS. Intrachain disulfides connect cysteine 30-cysteine 56, cysteine 39-cysteine 60, cysteine 43-cysteine 55, and cysteine 49-cysteine 65.

This sequence belongs to the venom waprin family. Cys-rich waprin subfamily. In terms of tissue distribution, expressed by the venom gland.

The protein resides in the secreted. Functionally, antimicrobial peptides with activity against Gram-positive and Gram-negative bacteria as well as fungi. Recognizes carbohydrates in the microbial cell walls, and induces structural damage to them. Also inhibits microbial serine proteases, as well as mammalian elastases. Carbohydrates that are recognized are LPS, mannan, peptidoglycan, and N-acetl-D-glucosamine. This Tetramorium bicarinatum (Tramp ant) protein is Waprin-like protein.